The chain runs to 328 residues: MNVAVVMGGYSDESVISLRSGQLILNNLDKSKYNIFEVHILLKDWSVVIEGEKYPINKADFSFTKNGVITKFDVAINTVHGTPGEDGHLQSYWELIDIPYTGCNFYQSALTFNKRDTLSVLTKFNIPKAKSIYLRKGDVIDGNEIKKALGLPFFVKPNQSGSSLGVSKVDALDQLEKALEFAFAEDNEILIESYLNGTEVSVGVLNYKGQTKVLGITEILSQNDFFDYEAKYLGKSEEITPARISKEEEILVAESAKKIYNSLGMSGFSRTDFIIMNGIPHFIEINTNPGLSPQSIFPQQAMFAKMDMPQMLDNEITLALSRKPIWKK.

In terms of domain architecture, ATP-grasp spans 118 to 317; the sequence is LSVLTKFNIP…MPQMLDNEIT (200 aa). An ATP-binding site is contributed by 146 to 201; the sequence is KKALGLPFFVKPNQSGSSLGVSKVDALDQLEKALEFAFAEDNEILIESYLNGTEVS. Residues Asp-272, Glu-284, and Asn-286 each contribute to the Mg(2+) site.

The protein belongs to the D-alanine--D-alanine ligase family. It depends on Mg(2+) as a cofactor. The cofactor is Mn(2+).

The protein resides in the cytoplasm. The catalysed reaction is 2 D-alanine + ATP = D-alanyl-D-alanine + ADP + phosphate + H(+). It participates in cell wall biogenesis; peptidoglycan biosynthesis. Cell wall formation. The polypeptide is D-alanine--D-alanine ligase (Flavobacterium psychrophilum (strain ATCC 49511 / DSM 21280 / CIP 103535 / JIP02/86)).